The primary structure comprises 312 residues: D-alanine--D-alanine ligase (312 aa).

The 206-residue stretch at 102-307 folds into the ATP-grasp domain; sequence KKIFKMEGIP…FPELTDRLIK (206 aa). 136 to 191 lines the ATP pocket; the sequence is IKEVGVPAVVKANTQGSTIGITFVHVKEKMAEAIESALKYDQDVLVEQFVAGTEVT. Mg(2+) is bound by residues Asp262, Glu274, and Asn276.

The protein belongs to the D-alanine--D-alanine ligase family. Mg(2+) is required as a cofactor. The cofactor is Mn(2+).

It is found in the cytoplasm. It carries out the reaction 2 D-alanine + ATP = D-alanyl-D-alanine + ADP + phosphate + H(+). Its pathway is cell wall biogenesis; peptidoglycan biosynthesis. Cell wall formation. The protein is D-alanine--D-alanine ligase of Desulforamulus reducens (strain ATCC BAA-1160 / DSM 100696 / MI-1) (Desulfotomaculum reducens).